Here is a 253-residue protein sequence, read N- to C-terminus: Demethylmenaquinone methyltransferase (253 aa).

S-adenosyl-L-methionine contacts are provided by residues Thr62, Asp80, 102–103 (DA), and Ser119.

This sequence belongs to the class I-like SAM-binding methyltransferase superfamily. MenG/UbiE family.

It carries out the reaction a 2-demethylmenaquinol + S-adenosyl-L-methionine = a menaquinol + S-adenosyl-L-homocysteine + H(+). It functions in the pathway quinol/quinone metabolism; menaquinone biosynthesis; menaquinol from 1,4-dihydroxy-2-naphthoate: step 2/2. In terms of biological role, methyltransferase required for the conversion of demethylmenaquinol (DMKH2) to menaquinol (MKH2). This chain is Demethylmenaquinone methyltransferase, found in Paenarthrobacter aurescens (strain TC1).